The chain runs to 377 residues: Early estrogen-induced gene 1 protein (377 aa).

The C2 NT-type domain maps to 2–145 (AFLTKKKKFK…ILKVNIGMSL (144 aa)). Composition is skewed to polar residues over residues 160–173 (KTVS…SLQM), 188–198 (VRQNRSRQAML), and 222–234 (SRNS…QSKI). Positions 160–313 (KTVSPPGQDS…SVESQPTWVD (154 aa)) are disordered. Residues 256-269 (TSTSSSVSGGLSLT) are compositionally biased toward low complexity. Over residues 274–285 (EPERDVKPEKPP) the composition is skewed to basic and acidic residues.

It belongs to the EEIG family.

It is found in the nucleus. The protein resides in the cytoplasm. Functionally, may be involved in osteoclast differentiation. The sequence is that of Early estrogen-induced gene 1 protein (eeig1) from Xenopus laevis (African clawed frog).